Consider the following 1115-residue polypeptide: MFYPVKVGTRERWSYSRIREVLDMPNLIEIQQNSYQWFLDEGLREMFRDISPIQDFTGNLVLEFIDYSLGEPKYEVEECKERDVTYAAPLRVKVRLINKETGEVKEQEVFMGDFPLMTTKGTFIINGAERVIVSQLVRSPGVYYSESIDPSGKKVFGATVIPNRGAWLEFETDVNDNIFVRVDRTRKLPATVLIRALGYATNGQIAELFDDNEHIRITLERDNTESAEEALVEIYKRLRPGEPPTVDSARSLLEALFFDPKRYDLAKVGRYKLNKKLNLSVPTDVHHLTKEDIVASLRQMLTLMSGEGHKDDIDHLGNRRLRSVGELLQNQFRIGLSRMERVVRERMTIQDVDVITPQVLINIRPVVAAIKEFFGSSQLSQFMDQTNPLAELTHKRRLSALGPGGLSRERAGFEVRDVHHSHYGRMCPIETPEGPNIGLIGSLSTYGRINPYGFIEAPYRKVNNGQVTDQIDYLTADEEEKFVVAQANAPLTDDGHFIEEKIDGRHGPDFVLVAPERIDYMDVSPKQMVSIATALIPFLEHDDANRALMGANMQRQAVPLLRTDAPYVGTGMEYKAAKDSGVCVLASKDGTVERATAEDIIIRHDDGTLEKHKLLKYLRSNQGTCINQRPIVMKNERVEAGQIIADGPSTDHGELALGRNVLIAFMTWEGYNYEDAILISEKLVKEDYYTSIHIEEYEADARDTKLGPEEITRDIPNVGEDVLKDLDERGIIRIGAEVSTGDILVGKVTPKGETELTAEERLLRAIFGEKAREVRDTSLRVPHGEAGKIVDVKVFTRENGDELAPGVNELVRVYIAQKRKISVGDKMAGRHGNKGVISRIMKQEDMPFLPDGTPVEIVLNPLGVPSRMNIGQVMETHLGWAAKALGLRLATPVFDGAQEEDVFATLRKAGLPETGKTVLYDGRTGDPFDNKITVGYMYFLKLHHLVDDKIHARSTGPYSLVTQQPLGGKAQFGGQRFGEMEVWALEAYGAAYTLQEILTVKSDDVVGRVKTYEAIVKGENIPEPGVPESFKVLIKELQSLGLDVRVLSENDEEIEIREIDEDVTETAKELGIDLHEDLPAPVIHEAGEGEDDEYFEEDEEAVDDEPMTFDDDDME.

A disordered region spans residues 1084-1115; sequence HEAGEGEDDEYFEEDEEAVDDEPMTFDDDDME. Over residues 1088 to 1115 the composition is skewed to acidic residues; the sequence is EGEDDEYFEEDEEAVDDEPMTFDDDDME.

It belongs to the RNA polymerase beta chain family. As to quaternary structure, the RNAP catalytic core consists of 2 alpha, 1 beta, 1 beta' and 1 omega subunit. When a sigma factor is associated with the core the holoenzyme is formed, which can initiate transcription.

It catalyses the reaction RNA(n) + a ribonucleoside 5'-triphosphate = RNA(n+1) + diphosphate. Its function is as follows. DNA-dependent RNA polymerase catalyzes the transcription of DNA into RNA using the four ribonucleoside triphosphates as substrates. The chain is DNA-directed RNA polymerase subunit beta from Desulfitobacterium hafniense (strain Y51).